The following is a 194-amino-acid chain: MGKLRPSRGRGFADVSQQIRVRNRPSWACRRGGPLGTLLANAGPSTVPVTPTAGSCQPSPLSPGGSDPPPPPRAHVSPQEAPLGQVPGAEWLPPTRGLLCKDVSSSPGPSFHLGGPGLPGHAGPCGPRARPAQGLAGRGGNVGEGSESPLGTLPCSVPASQQLLRGRSHLQGSLAALGEARGGGAAFSWGQEGP.

The tract at residues 25-156 (PSWACRRGGP…ESPLGTLPCS (132 aa)) is disordered. Residues 43 to 57 (GPSTVPVTPTAGSCQ) are compositionally biased toward polar residues. Residues 104–113 (SSSPGPSFHL) are compositionally biased toward low complexity.

This is an uncharacterized protein from Homo sapiens (Human).